Reading from the N-terminus, the 501-residue chain is Probable pectate lyase 13 (501 aa).

Positions 1 to 22 (MLLQNFSNTIFLLCLFFTLLSA) are cleaved as a signal peptide. Asn-27 and Asn-49 each carry an N-linked (GlcNAc...) asparagine glycan. The interval 55–78 (RQLSSPSSSSSSSSSSSSSSCRTG) is disordered. A compositionally biased stretch (low complexity) spans 58 to 74 (SSPSSSSSSSSSSSSSS). Residues Asp-217, Asp-241, and Asp-245 each coordinate Ca(2+). The active site involves Arg-297. Disordered stretches follow at residues 329 to 359 (INSQ…DGEW) and 408 to 463 (NAGV…SSGD). A compositionally biased stretch (basic and acidic residues) spans 343–357 (SAKEVTKRVDSKDDG). The span at 430–449 (GGDGGGGGSSGGSSGGGMDV) shows a compositional bias: gly residues. Residues 450–463 (MGGTTRGSSSSSGD) are compositionally biased toward low complexity. Ser-474 carries GPI-anchor amidated serine lipidation. Residues 475-501 (DAPSRPRLTLLFSLLMISVLSLSTLLL) constitute a propeptide, removed in mature form.

It belongs to the polysaccharide lyase 1 family. It depends on Ca(2+) as a cofactor. Expressed equally in mature leaves, buds, flowers, rosettes and roots.

The protein localises to the cell membrane. It catalyses the reaction Eliminative cleavage of (1-&gt;4)-alpha-D-galacturonan to give oligosaccharides with 4-deoxy-alpha-D-galact-4-enuronosyl groups at their non-reducing ends.. It functions in the pathway glycan metabolism; pectin degradation; 2-dehydro-3-deoxy-D-gluconate from pectin: step 2/5. Functionally, susceptibility factor required for infection by most powdery mildews, but not by unrelated pathogens. Exact function not known, but clearly affects cell wall composition. The chain is Probable pectate lyase 13 (PMR6) from Arabidopsis thaliana (Mouse-ear cress).